The following is a 1172-amino-acid chain: WD repeat-containing protein 48 homolog (1172 aa).

The segment at Met-1–Thr-115 is disordered. The segment covering Leu-13–Pro-36 has biased composition (polar residues). Over residues Asn-37–Asn-63 the composition is skewed to low complexity. Over residues Arg-64–Gln-89 the composition is skewed to polar residues. Low complexity predominate over residues Tyr-90–Ser-107. 7 WD repeats span residues Arg-152–Phe-202, Asp-208–Ser-246, Phe-249–Phe-548, Gly-560–Lys-599, Gly-602–Val-641, Leu-645–Leu-683, and Arg-686–Ile-727. The segment covering Ile-341 to Asn-365 has biased composition (low complexity). A disordered region spans residues Ile-341–Phe-544. 3 stretches are compositionally biased toward polar residues: residues Gly-366–Thr-377, Gln-388–Asn-408, and Pro-417–Arg-434. Residues Asn-435 to Val-485 are compositionally biased toward low complexity. A compositionally biased stretch (acidic residues) spans Asp-486–Asp-503. A compositionally biased stretch (basic and acidic residues) spans Cys-504–Asp-513. A compositionally biased stretch (low complexity) spans Asn-514 to Lys-543. Over residues Asn-745 to Asn-769 the composition is skewed to low complexity. Positions Asn-745–Ser-775 are disordered. A WD 8 repeat occupies Gln-794–Ser-833. Residues Glu-926–Arg-986 are disordered. The span at Ser-930–Ser-984 shows a compositional bias: low complexity.

The protein belongs to the WD repeat WDR48 family.

The sequence is that of WD repeat-containing protein 48 homolog from Dictyostelium discoideum (Social amoeba).